The sequence spans 119 residues: Toxin ICK-8 (119 aa).

An N-terminal signal peptide occupies residues 1-19; that stretch reads MMKLYSLVIIATLAAAAFA. 4 disulfide bridges follow: cysteine 59–cysteine 74, cysteine 67–cysteine 80, cysteine 71–cysteine 116, and cysteine 73–cysteine 87.

It belongs to the neurotoxin 25 family. ICK-8 subfamily. In terms of tissue distribution, expressed by the venom gland.

It is found in the secreted. Its function is as follows. Ion channel inhibitor. This chain is Toxin ICK-8, found in Trittame loki (Brush-footed trapdoor spider).